Consider the following 176-residue polypeptide: Small ribosomal subunit protein uS5 (176 aa).

One can recognise an S5 DRBM domain in the interval 11–74; it reads LSEVLVDVNR…QAAKKRMMKV (64 aa).

This sequence belongs to the universal ribosomal protein uS5 family. As to quaternary structure, part of the 30S ribosomal subunit. Contacts proteins S4 and S8.

In terms of biological role, with S4 and S12 plays an important role in translational accuracy. Its function is as follows. Located at the back of the 30S subunit body where it stabilizes the conformation of the head with respect to the body. This chain is Small ribosomal subunit protein uS5, found in Rickettsia rickettsii (strain Iowa).